The sequence spans 474 residues: Glutamate--tRNA ligase (474 aa).

Residues proline 11–glycine 21 carry the 'HIGH' region motif. A 'KMSKS' region motif is present at residues lysine 240–arginine 244. Lysine 243 contributes to the ATP binding site.

It belongs to the class-I aminoacyl-tRNA synthetase family. Glutamate--tRNA ligase type 1 subfamily. Monomer.

The protein resides in the cytoplasm. It catalyses the reaction tRNA(Glu) + L-glutamate + ATP = L-glutamyl-tRNA(Glu) + AMP + diphosphate. Functionally, catalyzes the attachment of glutamate to tRNA(Glu) in a two-step reaction: glutamate is first activated by ATP to form Glu-AMP and then transferred to the acceptor end of tRNA(Glu). This Nitrobacter hamburgensis (strain DSM 10229 / NCIMB 13809 / X14) protein is Glutamate--tRNA ligase.